Consider the following 214-residue polypeptide: Adenylate kinase (214 aa).

ATP is bound at residue 11–16 (GTGKGT). The segment at 31-61 (SSGDLFRFYAKEEKTALAEEIKSYINNGLYV) is NMP. AMP is bound by residues Ser32, Arg37, 59–61 (LYV), 87–90 (GYPR), and Gln94. The tract at residues 124–163 (LRRSCPQCKRIYNINSVDFKPKVANLCDLCKVELIHRKDD) is LID. Arg125 serves as a coordination point for ATP. Zn(2+) contacts are provided by Cys128 and Cys131. 134-135 (IY) contacts ATP. 2 residues coordinate Zn(2+): Cys150 and Cys153. Arg160 and Arg171 together coordinate AMP. Lys199 lines the ATP pocket.

It belongs to the adenylate kinase family. Monomer.

It localises to the cytoplasm. The enzyme catalyses AMP + ATP = 2 ADP. Its pathway is purine metabolism; AMP biosynthesis via salvage pathway; AMP from ADP: step 1/1. In terms of biological role, catalyzes the reversible transfer of the terminal phosphate group between ATP and AMP. Plays an important role in cellular energy homeostasis and in adenine nucleotide metabolism. This chain is Adenylate kinase, found in Mycoplasmoides gallisepticum (strain R(low / passage 15 / clone 2)) (Mycoplasma gallisepticum).